The primary structure comprises 73 residues: Dermaseptin-H4 (73 aa).

The N-terminal stretch at Met-1–Cys-22 is a signal peptide. Residues Glu-23–Met-43 constitute a propeptide that is removed on maturation. A disordered region spans residues Glu-25–Arg-45. The segment covering Glu-30–Gln-40 has biased composition (acidic residues). Residue Leu-70 is modified to Leucine amide. The propeptide occupies Glu-72–Gln-73.

In terms of tissue distribution, expressed by the skin glands.

The protein localises to the secreted. Its function is as follows. Has antibacterial activity against the Gram-negative bacteria E.coli ATCC 11775 (MIC=0.8 uM), and the Gram-positive bacteria S.aureus ATCC 12600 (MIC=0.4 uM) and M.luteus ATCC 49732 (MIC=0.8 uM). Does not inhibit the growth of the fungus C.albicans. Probably acts by disturbing membrane functions with its amphipathic structure. This chain is Dermaseptin-H4, found in Pithecopus azureus (Orange-legged monkey tree frog).